The sequence spans 293 residues: Elongation factor Ts (293 aa).

The involved in Mg(2+) ion dislocation from EF-Tu stretch occupies residues 80–83 (TDFV).

Belongs to the EF-Ts family.

Its subcellular location is the cytoplasm. Associates with the EF-Tu.GDP complex and induces the exchange of GDP to GTP. It remains bound to the aminoacyl-tRNA.EF-Tu.GTP complex up to the GTP hydrolysis stage on the ribosome. The polypeptide is Elongation factor Ts (Enterococcus faecalis (strain ATCC 700802 / V583)).